We begin with the raw amino-acid sequence, 505 residues long: Amidophosphoribosyltransferase (505 aa).

The Nucleophile role is filled by cysteine 2. Residues 2–235 (CGIVGIVSQS…AGEAVYVTFD (234 aa)) form the Glutamine amidotransferase type-2 domain. The Mg(2+) site is built by threonine 306, aspartate 368, and aspartate 369. A disordered region spans residues 484 to 505 (RNDNAKKKREKQASNLEIYNEQ). A compositionally biased stretch (polar residues) spans 496-505 (ASNLEIYNEQ).

It in the C-terminal section; belongs to the purine/pyrimidine phosphoribosyltransferase family. It depends on Mg(2+) as a cofactor.

It catalyses the reaction 5-phospho-beta-D-ribosylamine + L-glutamate + diphosphate = 5-phospho-alpha-D-ribose 1-diphosphate + L-glutamine + H2O. The protein operates within purine metabolism; IMP biosynthesis via de novo pathway; N(1)-(5-phospho-D-ribosyl)glycinamide from 5-phospho-alpha-D-ribose 1-diphosphate: step 1/2. In terms of biological role, catalyzes the formation of phosphoribosylamine from phosphoribosylpyrophosphate (PRPP) and glutamine. In Haemophilus influenzae (strain ATCC 51907 / DSM 11121 / KW20 / Rd), this protein is Amidophosphoribosyltransferase.